The chain runs to 530 residues: Probable ATP-binding protein YbiT (530 aa).

ABC transporter domains are found at residues 2-252 and 320-526; these read LVSS…ERLL and LEVE…YLRS. ATP-binding positions include 34 to 41 and 352 to 359; these read GANGSGKS and GTNGVGKS.

The protein belongs to the ABC transporter superfamily. ABCF family. YbiT subfamily.

The sequence is that of Probable ATP-binding protein YbiT (ybiT) from Escherichia coli O157:H7.